Here is a 490-residue protein sequence, read N- to C-terminus: MASFKIAIIGAGSIGFTKKLFTDILSVPELRDVEFALTDLSEHNLAMIKSILDRIVEANELPTRVTATTDRRKALEGARYIISCVRVGGLEAYADDIRIPLKYGVDQCVGDTICAGGILYGQRNIPVILDFCKDIREVAEPGAKFLNYANPMAMNTWAAIEYGKVDTVGLCHGVQHGAEQIAEILGARDGELDYICSGINHQTWFVDVRLNGRKVGKDELVAAFEAHPVFSKQEKLRIDVLKRFGVYSTESNGHLSEYLPWYRKRPDEISRWIDMSDWIHGETGGYLRYSTETRNWFETEYPRFLEEAGRPLETIRRSNEHASRILEALETGRVYRGHFNVKNNGVITNLPADAIIESPGFVDRFGINMVAGITLPEACAATCISSVNVQRMSVHAAITGDIDLLKLAVLHDPLVGAICTPEEVWQMVDEMVVAQAKWLPQYAHAIDAAKERLARATVATREWKGAARREVRSIEEIRAEKEAAKLRAAG.

Residue 4 to 70 coordinates NAD(+); sequence FKIAIIGAGS…LPTRVTATTD (67 aa). N150 contacts substrate. C171 contributes to the Mn(2+) binding site. H172 serves as the catalytic Proton donor. H201 contacts Mn(2+). The active-site Proton acceptor is the Y258.

This sequence belongs to the glycosyl hydrolase 4 family. As to quaternary structure, homodimer. It depends on Mn(2+) as a cofactor. The cofactor is NAD(+).

It carries out the reaction Hydrolysis of terminal, non-reducing alpha-D-galactose residues in alpha-D-galactosides, including galactose oligosaccharides, galactomannans and galactolipids.. This is Alpha-galactosidase (melA) from Rhizobium meliloti (strain 1021) (Ensifer meliloti).